The following is a 248-amino-acid chain: uncharacterized protein (248 aa).

NADP(+) is bound at residue 8-32; that stretch reads IVTGAAQGIGQAYAQALAREGASVV. Residue Ser-143 participates in substrate binding. Residue Tyr-153 is the Proton acceptor of the active site.

The protein belongs to the short-chain dehydrogenases/reductases (SDR) family.

This is an uncharacterized protein from Mycobacterium tuberculosis (strain CDC 1551 / Oshkosh).